A 330-amino-acid polypeptide reads, in one-letter code: MFGLRRNAVIGLNLYCGGASLGAGGGSPAGTRLAAEEAKARREGGGEAALLPGARVVARPPPVGAEDPDVTASAERRLLKSPGLLAVPPEEMAASAAAIMSPEEELDGCEPEVLSKRPAVLPLLERVSEAAKSSGADGSLPSTPPPPEEEDDELYRQSLEIISRYLREQATGSKDAKPLGEAGAAGRRALETLRRVGDGVQRNHETAFQGMLRKLDIKNEDDVKSFSRVMTHVFKDGVTNWGRIVTLISFGAFVAKHLKSINQESCIEPLAESITDVLVRTKRDWLVKQRGWDGFVEFFHVQDLEGGIRNVLLAFAGVAGVGAGLAYLIR.

Residues 85–155 (LAVPPEEMAA…PPEEEDDELY (71 aa)) are PEST-like. Serine 101 is subject to Phosphoserine. Residue lysine 116 forms a Glycyl lysine isopeptide (Lys-Gly) (interchain with G-Cter in ubiquitin) linkage. The tract at residues 129-153 (EAAKSSGADGSLPSTPPPPEEEDDE) is disordered. Residue serine 139 is modified to Phosphoserine; by GSK3-alpha and GSK3-beta. A Phosphoserine modification is found at serine 142. Phosphothreonine; by MAPK is present on threonine 143. Residues lysine 174 and lysine 177 each participate in a glycyl lysine isopeptide (Lys-Gly) (interchain with G-Cter in ubiquitin) cross-link. Residues 189 to 203 (ALETLRRVGDGVQRN) carry the BH3 motif. Positions 232–252 (HVFKDGVTNWGRIVTLISFGA) match the BH1 motif. Residues 284-299 (DWLVKQRGWDGFVEFF) carry the BH2 motif. A helical membrane pass occupies residues 307–329 (GIRNVLLAFAGVAGVGAGLAYLI).

It belongs to the Bcl-2 family. In terms of assembly, interacts with HIF3A (via C-terminus domain). Interacts with BOK, BIK, BAX, BAK1, and TPT1. Interacts with unphosphorylated BAD. Interacts with BMF, BBC3 and PMAIP1. Interacts with BOP. Interacts with BCL2L11; may sequester BCL2L11 to prevent its pro-apoptotic activity. Interacts with GIMAP5 and HSPA8/HSC70; the interaction between HSPA8 and MCL1 is impaired in the absence of GIMAP5. In terms of processing, cleaved by CASP3 during apoptosis, yielding a pro-apoptotic C-terminal fragment. Rapidly degraded in the absence of phosphorylation in the PEST region. Post-translationally, phosphorylated on Ser-139, by GSK3, in response to IL3/interleukin-3 withdrawal. Phosphorylation at Ser-139 induces ubiquitination and proteasomal degradation, abrogating the anti-apoptotic activity. Treatment with taxol or okadaic acid induces phosphorylation on additional sites. In terms of processing, ubiquitinated. Ubiquitination is induced by phosphorylation at Ser-139. Deubiquitinated by USP20; leading to increased stability. In terms of tissue distribution, ubiquitous. Highly expressed in heart, spleen, lung, liver, skeletal muscle and kidney. Detected at lower levels in brain, ovary, oviduct and testis.

It localises to the membrane. The protein localises to the cytoplasm. It is found in the mitochondrion. Its subcellular location is the nucleus. The protein resides in the nucleoplasm. Its function is as follows. Involved in the regulation of apoptosis versus cell survival, and in the maintenance of viability but not of proliferation. Mediates its effects by interactions with a number of other regulators of apoptosis. The protein is Induced myeloid leukemia cell differentiation protein Mcl-1 homolog (Mcl1) of Rattus norvegicus (Rat).